The following is a 660-amino-acid chain: Bifunctional polymyxin resistance protein ArnA (660 aa).

The formyltransferase ArnAFT stretch occupies residues 1–304; the sequence is MKTVVFAYHD…TLGLVQGSRL (304 aa). A (6R)-10-formyltetrahydrofolate-binding site is contributed by 86–88; the sequence is HLI. H104 (proton donor; for formyltransferase activity) is an active-site residue. (6R)-10-formyltetrahydrofolate is bound by residues R114 and 136–140; that span reads VKRAD. A dehydrogenase ArnADH region spans residues 314-660; the sequence is RRTRVLILGV…RTVDLTDKPS (347 aa). NAD(+) is bound by residues D347 and 368–369; that span reads DI. Residues A393, Y398, and 432-433 contribute to the UDP-alpha-D-glucuronate site; that span reads TS. Catalysis depends on E434, which acts as the Proton acceptor; for decarboxylase activity. UDP-alpha-D-glucuronate is bound by residues R460, N492, 526 to 535, and Y613; that span reads KLIDGGKQKR. The active-site Proton donor; for decarboxylase activity is the R619.

In the N-terminal section; belongs to the Fmt family. UDP-L-Ara4N formyltransferase subfamily. The protein in the C-terminal section; belongs to the NAD(P)-dependent epimerase/dehydratase family. UDP-glucuronic acid decarboxylase subfamily. As to quaternary structure, homohexamer, formed by a dimer of trimers.

It carries out the reaction UDP-alpha-D-glucuronate + NAD(+) = UDP-beta-L-threo-pentopyranos-4-ulose + CO2 + NADH. It catalyses the reaction UDP-4-amino-4-deoxy-beta-L-arabinose + (6R)-10-formyltetrahydrofolate = UDP-4-deoxy-4-formamido-beta-L-arabinose + (6S)-5,6,7,8-tetrahydrofolate + H(+). Its pathway is nucleotide-sugar biosynthesis; UDP-4-deoxy-4-formamido-beta-L-arabinose biosynthesis; UDP-4-deoxy-4-formamido-beta-L-arabinose from UDP-alpha-D-glucuronate: step 1/3. It participates in nucleotide-sugar biosynthesis; UDP-4-deoxy-4-formamido-beta-L-arabinose biosynthesis; UDP-4-deoxy-4-formamido-beta-L-arabinose from UDP-alpha-D-glucuronate: step 3/3. The protein operates within bacterial outer membrane biogenesis; lipopolysaccharide biosynthesis. Its function is as follows. Bifunctional enzyme that catalyzes the oxidative decarboxylation of UDP-glucuronic acid (UDP-GlcUA) to UDP-4-keto-arabinose (UDP-Ara4O) and the addition of a formyl group to UDP-4-amino-4-deoxy-L-arabinose (UDP-L-Ara4N) to form UDP-L-4-formamido-arabinose (UDP-L-Ara4FN). The modified arabinose is attached to lipid A and is required for resistance to polymyxin and cationic antimicrobial peptides. The chain is Bifunctional polymyxin resistance protein ArnA from Escherichia coli (strain SMS-3-5 / SECEC).